Reading from the N-terminus, the 158-residue chain is Transcription elongation factor GreA (158 aa).

Residues 49-69 adopt a coiled-coil conformation; sequence SEYESAKDEQAFVEGRISQIE. A disordered region spans residues 102–125; that stretch reads EEPESYTIVGESESDPLSGKISNE.

This sequence belongs to the GreA/GreB family.

Functionally, necessary for efficient RNA polymerase transcription elongation past template-encoded arresting sites. The arresting sites in DNA have the property of trapping a certain fraction of elongating RNA polymerases that pass through, resulting in locked ternary complexes. Cleavage of the nascent transcript by cleavage factors such as GreA or GreB allows the resumption of elongation from the new 3'terminus. GreA releases sequences of 2 to 3 nucleotides. The sequence is that of Transcription elongation factor GreA from Limosilactobacillus fermentum (strain NBRC 3956 / LMG 18251) (Lactobacillus fermentum).